The sequence spans 812 residues: Valine--tRNA ligase (812 aa).

The 'HIGH' region motif lies at 46 to 56; the sequence is PTVSGQLHIGH. Residues 536-540 carry the 'KMSKS' region motif; that stretch reads KMSKS. Residue K539 participates in ATP binding.

Belongs to the class-I aminoacyl-tRNA synthetase family. ValS type 2 subfamily. In terms of assembly, monomer.

It localises to the cytoplasm. The catalysed reaction is tRNA(Val) + L-valine + ATP = L-valyl-tRNA(Val) + AMP + diphosphate. Functionally, catalyzes the attachment of valine to tRNA(Val). As ValRS can inadvertently accommodate and process structurally similar amino acids such as threonine, to avoid such errors, it has a 'posttransfer' editing activity that hydrolyzes mischarged Thr-tRNA(Val) in a tRNA-dependent manner. The polypeptide is Valine--tRNA ligase (Rickettsia rickettsii (strain Iowa)).